Reading from the N-terminus, the 750-residue chain is Serine/threonine-protein kinase PknG (750 aa).

A disordered region spans residues 1-66 (MAKASETERS…PQDRMATTSR (66 aa)). A compositionally biased stretch (polar residues) spans 17-34 (ADAQTATSATVRPLSTQA). A Protein kinase domain is found at 151 to 396 (YEVKGCIAHG…EMSAQLTGVL (246 aa)). Residues 157–165 (IAHGGLGWI) and K181 contribute to the ATP site. D276 serves as the catalytic Proton acceptor.

Belongs to the protein kinase superfamily. Ser/Thr protein kinase family. Post-translationally, autophosphorylated.

It carries out the reaction L-seryl-[protein] + ATP = O-phospho-L-seryl-[protein] + ADP + H(+). It catalyses the reaction L-threonyl-[protein] + ATP = O-phospho-L-threonyl-[protein] + ADP + H(+). In Mycobacterium bovis (strain ATCC BAA-935 / AF2122/97), this protein is Serine/threonine-protein kinase PknG (pknG).